The primary structure comprises 159 residues: uncharacterized protein (159 aa).

Residues 4–153 (IKTDDLTHPA…HSRFLSLTLC (150 aa)) form the N-acetyltransferase domain.

The protein belongs to the acetyltransferase family.

This is an uncharacterized protein from Escherichia coli (strain K12).